Here is a 744-residue protein sequence, read N- to C-terminus: Phosphoribosylformylglycinamidine synthase subunit PurL (744 aa).

His45 is a catalytic residue. ATP-binding residues include Tyr48 and Lys87. Residue Glu89 coordinates Mg(2+). Residues 90 to 93 (SHNH) and Arg112 contribute to the substrate site. The Proton acceptor role is filled by His91. Residue Asp113 coordinates Mg(2+). Gln236 provides a ligand contact to substrate. Asp264 contributes to the Mg(2+) binding site. A substrate-binding site is contributed by 308–310 (ESQ). ATP is bound by residues Asn492 and Gly529. A Mg(2+)-binding site is contributed by Asn530. Position 532 (Ser532) interacts with substrate.

Belongs to the FGAMS family. As to quaternary structure, monomer. Part of the FGAM synthase complex composed of 1 PurL, 1 PurQ and 2 PurS subunits.

It localises to the cytoplasm. It catalyses the reaction N(2)-formyl-N(1)-(5-phospho-beta-D-ribosyl)glycinamide + L-glutamine + ATP + H2O = 2-formamido-N(1)-(5-O-phospho-beta-D-ribosyl)acetamidine + L-glutamate + ADP + phosphate + H(+). It participates in purine metabolism; IMP biosynthesis via de novo pathway; 5-amino-1-(5-phospho-D-ribosyl)imidazole from N(2)-formyl-N(1)-(5-phospho-D-ribosyl)glycinamide: step 1/2. Functionally, part of the phosphoribosylformylglycinamidine synthase complex involved in the purines biosynthetic pathway. Catalyzes the ATP-dependent conversion of formylglycinamide ribonucleotide (FGAR) and glutamine to yield formylglycinamidine ribonucleotide (FGAM) and glutamate. The FGAM synthase complex is composed of three subunits. PurQ produces an ammonia molecule by converting glutamine to glutamate. PurL transfers the ammonia molecule to FGAR to form FGAM in an ATP-dependent manner. PurS interacts with PurQ and PurL and is thought to assist in the transfer of the ammonia molecule from PurQ to PurL. The polypeptide is Phosphoribosylformylglycinamidine synthase subunit PurL (Erythrobacter litoralis (strain HTCC2594)).